The chain runs to 213 residues: Peptidyl-prolyl cis-trans isomerase B (213 aa).

The N-terminal stretch at 1–23 (MAVLRVLCGLLLVSILFLGFVLS) is a signal peptide. The PPIase cyclophilin-type domain occupies 35–197 (FFDIEVDEQP…KSVKIANCGH (163 aa)). A Prevents secretion from ER motif is present at residues 210–213 (DAAE).

Belongs to the cyclophilin-type PPIase family. PPIase B subfamily.

Its subcellular location is the endoplasmic reticulum lumen. It catalyses the reaction [protein]-peptidylproline (omega=180) = [protein]-peptidylproline (omega=0). Its activity is regulated as follows. Inhibited by cyclosporin A (CsA). In terms of biological role, PPIases accelerate the folding of proteins. It catalyzes the cis-trans isomerization of proline imidic peptide bonds in oligopeptides. This chain is Peptidyl-prolyl cis-trans isomerase B, found in Schistosoma japonicum (Blood fluke).